Consider the following 186-residue polypeptide: Elongation factor P (186 aa).

This sequence belongs to the elongation factor P family.

The protein localises to the cytoplasm. It participates in protein biosynthesis; polypeptide chain elongation. Functionally, involved in peptide bond synthesis. Stimulates efficient translation and peptide-bond synthesis on native or reconstituted 70S ribosomes in vitro. Probably functions indirectly by altering the affinity of the ribosome for aminoacyl-tRNA, thus increasing their reactivity as acceptors for peptidyl transferase. This Maridesulfovibrio salexigens (strain ATCC 14822 / DSM 2638 / NCIMB 8403 / VKM B-1763) (Desulfovibrio salexigens) protein is Elongation factor P.